The following is a 368-amino-acid chain: GTPase Obg (368 aa).

In terms of domain architecture, Obg spans 1–161 (MRFVDEATIT…RSLRLELKIL (161 aa)). One can recognise an OBG-type G domain in the interval 162–337 (ADAGLLGLPN…VVAEMWRMRD (176 aa)). Residues 168-175 (GLPNAGKS), 193-197 (FTTLI), 217-220 (DIPG), 290-293 (NKID), and 318-320 (SAL) contribute to the GTP site. Mg(2+) contacts are provided by Ser175 and Thr195.

It belongs to the TRAFAC class OBG-HflX-like GTPase superfamily. OBG GTPase family. Monomer. The cofactor is Mg(2+).

It is found in the cytoplasm. In terms of biological role, an essential GTPase which binds GTP, GDP and possibly (p)ppGpp with moderate affinity, with high nucleotide exchange rates and a fairly low GTP hydrolysis rate. Plays a role in control of the cell cycle, stress response, ribosome biogenesis and in those bacteria that undergo differentiation, in morphogenesis control. The polypeptide is GTPase Obg (Nitratidesulfovibrio vulgaris (strain DSM 19637 / Miyazaki F) (Desulfovibrio vulgaris)).